The sequence spans 141 residues: 2S seed storage albumin protein (141 aa).

The first 22 residues, 1-22 (MARLTSIIALFAVALLVADAYA), serve as a signal peptide directing secretion. Residues 23-35 (YRTTITTVEVEEN) constitute a propeptide that is removed on maturation. Cystine bridges form between cysteine 43/cysteine 97, cysteine 55/cysteine 86, cysteine 87/cysteine 132, and cysteine 99/cysteine 139.

This sequence belongs to the 2S seed storage albumins family. As to quaternary structure, the mature protein consists of a small and a large chain linked by 2 disulfide bonds.

The protein localises to the vacuole. The protein resides in the aleurone grain. This is a 2S seed storage protein. This Cucurbita maxima (Pumpkin) protein is 2S seed storage albumin protein.